The sequence spans 301 residues: Beta carbonic anhydrase 5, chloroplastic (301 aa).

Residues 1 to 56 (MAATPTHFSVSHDPFSSTSLLNLQTQAIFGPNHSLKTTQLRIPASFRRKATNLQVM) constitute a chloroplast transit peptide. Residue Thr-65 is modified to Phosphothreonine. Ser-128 is modified (phosphoserine). Cys-231 bears the S-nitrosocysteine mark.

It belongs to the beta-class carbonic anhydrase family. As to expression, strongly expressed in aerial tissues including leaves, stems, flowers and siliques.

It localises to the plastid. The protein localises to the chloroplast. It catalyses the reaction hydrogencarbonate + H(+) = CO2 + H2O. Reversible hydration of carbon dioxide. This Arabidopsis thaliana (Mouse-ear cress) protein is Beta carbonic anhydrase 5, chloroplastic (BCA5).